The following is a 492-amino-acid chain: Spore germination protein GerLA (492 aa).

The next 3 helical transmembrane spans lie at 295–315 (IIAV…QGLI), 384–404 (FLVI…VYSI), and 410–430 (ILLF…IILA).

Belongs to the GerABKA family.

The protein resides in the membrane. Its function is as follows. Contributes to the L-alanine germination response. In Bacillus cereus, this protein is Spore germination protein GerLA (gerLA).